We begin with the raw amino-acid sequence, 354 residues long: DNA polymerase IV (354 aa).

The 185-residue stretch at 14–198 (IIHIDMDAFF…MDIAKFHGVG (185 aa)) folds into the UmuC domain. 2 residues coordinate Mg(2+): aspartate 18 and aspartate 116. Glutamate 117 is an active-site residue.

The protein belongs to the DNA polymerase type-Y family. Monomer. Mg(2+) serves as cofactor.

The protein localises to the cytoplasm. The enzyme catalyses DNA(n) + a 2'-deoxyribonucleoside 5'-triphosphate = DNA(n+1) + diphosphate. In terms of biological role, poorly processive, error-prone DNA polymerase involved in untargeted mutagenesis. Copies undamaged DNA at stalled replication forks, which arise in vivo from mismatched or misaligned primer ends. These misaligned primers can be extended by PolIV. Exhibits no 3'-5' exonuclease (proofreading) activity. May be involved in translesional synthesis, in conjunction with the beta clamp from PolIII. In Streptococcus gordonii (strain Challis / ATCC 35105 / BCRC 15272 / CH1 / DL1 / V288), this protein is DNA polymerase IV.